The chain runs to 185 residues: Protein TIFY 5 (185 aa).

A Tify domain is found at 38-72 (AAEARRNLTIFYNGRMCAVNVTELQARTIISMASQ). The segment at 77-185 (KQQQQQIQGR…RAAAPLYARR (109 aa)) is disordered. Residues 137-157 (PRAGLQAAAAAAPTMNQPPAA) are compositionally biased toward low complexity. The Jas signature appears at 155–182 (PAASGLSMKRSLQRFLEKRKTRAAAPLY). Positions 162–169 (MKRSLQRF) match the Nuclear localization signal motif.

The protein belongs to the TIFY/JAZ family. In terms of processing, ubiquitinated. Targeted for degradation by the SCF(COI1) E3 ubiquitin ligase-proteasome pathway during jasmonate signaling.

Its subcellular location is the nucleus. Its function is as follows. Repressor of jasmonate responses. This Oryza sativa subsp. indica (Rice) protein is Protein TIFY 5.